The sequence spans 534 residues: ATP synthase subunit beta 2 (534 aa).

A compositionally biased stretch (polar residues) spans 1 to 10 (MADPQATNGT). The segment at 1-30 (MADPQATNGTGAACAERDASDVGDVSDVGD) is disordered. Position 185–192 (185–192 (GGAGVGKT)) interacts with ATP. A compositionally biased stretch (basic and acidic residues) spans 494–505 (AAAREADARREA). The tract at residues 494-534 (AAAREADARREAAAAASGAGPGTTSDPASGSAEPQGARHGR) is disordered.

This sequence belongs to the ATPase alpha/beta chains family. In terms of assembly, F-type ATPases have 2 components, CF(1) - the catalytic core - and CF(0) - the membrane proton channel. CF(1) has five subunits: alpha(3), beta(3), gamma(1), delta(1), epsilon(1). CF(0) has three main subunits: a(1), b(2) and c(9-12). The alpha and beta chains form an alternating ring which encloses part of the gamma chain. CF(1) is attached to CF(0) by a central stalk formed by the gamma and epsilon chains, while a peripheral stalk is formed by the delta and b chains.

It is found in the cell inner membrane. The enzyme catalyses ATP + H2O + 4 H(+)(in) = ADP + phosphate + 5 H(+)(out). Functionally, produces ATP from ADP in the presence of a proton gradient across the membrane. The catalytic sites are hosted primarily by the beta subunits. In Burkholderia pseudomallei (strain 668), this protein is ATP synthase subunit beta 2.